A 205-amino-acid polypeptide reads, in one-letter code: Isochorismatase domain-containing protein 2 (205 aa).

It belongs to the isochorismatase family.

This is Isochorismatase domain-containing protein 2 (isoc2) from Xenopus laevis (African clawed frog).